A 221-amino-acid chain; its full sequence is Antigenic protein SchS34 (221 aa).

4 N-linked (GlcNAc...) asparagine glycosylation sites follow: asparagine 27, asparagine 69, asparagine 141, and asparagine 215.

Expressed in the mycelium (at protein level).

Its subcellular location is the secreted. It is found in the spore. The protein resides in the spore wall. The protein localises to the cytoplasm. In Stachybotrys chartarum (Toxic black mold), this protein is Antigenic protein SchS34.